Reading from the N-terminus, the 699-residue chain is MEPFCPLLLASFSLSLARAGQGNDTTPTESNWTSTTAGPPDPGASQPLLTWLLLPLLLLLFLLAAYFFRFRKQRKAVVSSNDKKMPNGILEEQEQQRVMLLSRSPSGPKKFFPIPVEHLEEEIRVRSADDCKRFREEFNSLPSGHIQGTFELANKEENREKNRYPNILPNDHCRVILSQVDGIPCSDYINASYIDGYKEKNKFIAAQGPKQETVNDFWRMVWEQRSATIVMLTNLKERKEEKCYQYWPDQGCWTYGNIRVCVEDCVVLVDYTIRKFCIHPQLPDSCKAPRLVSQLHFTSWPDFGVPFTPIGMLKFLKKVKTLNPSHAGPIVVHCSAGVGRTGTFIVIDAMMDMIHSEQKVDVFEFVSRIRNQRPQMVQTDVQYTFIYQALLEYYLYGDTELDVSSLERHLQTLHSTATHFDKIGLEEEFRKLTNVRIMKENMRTGNLPANMKKARVIQIIPYDFNRVILSMKRGQEFTDYINASFIDGYRQKDYFMATQGPLAHTVEDFWRMVWEWKSHTIVMLTEVQEREQDKCYQYWPTEGSVTHGDITIEIKSDTLSEAISVRDFLVTFKQPLARQEEQVRMVRQFHFHGWPEVGIPAEGKGMIDLIAAVQKQQQQTGNHPITVHCSAGAGRTGTFIALSNILERVKAEGLLDVFQAVKSLRLQRPHMVQTLEQYEFCYKVVQDFIDIFSDYANFK.

An N-terminal signal peptide occupies residues 1–19 (MEPFCPLLLASFSLSLARA). Over residues 20–36 (GQGNDTTPTESNWTSTT) the composition is skewed to low complexity. Residues 20 to 40 (GQGNDTTPTESNWTSTTAGPP) are disordered. Residues 20–45 (GQGNDTTPTESNWTSTTAGPPDPGAS) are Extracellular-facing. N-linked (GlcNAc...) asparagine glycosylation is found at Asn23 and Asn31. Residues 46–68 (QPLLTWLLLPLLLLLFLLAAYFF) form a helical membrane-spanning segment. The Cytoplasmic portion of the chain corresponds to 69–699 (RFRKQRKAVV…DIFSDYANFK (631 aa)). 2 Tyrosine-protein phosphatase domains span residues 134 to 393 (FREE…LLEY) and 425 to 688 (LEEE…VQDF). Substrate contacts are provided by residues Asp302, 334 to 340 (CSAGVGR), and Gln378. Residue Cys334 is the Phosphocysteine intermediate of the active site. Cys629 acts as the Phosphocysteine intermediate in catalysis. Phosphotyrosine is present on Tyr695.

This sequence belongs to the protein-tyrosine phosphatase family. Receptor class 4 subfamily. As to quaternary structure, monomer. Isoform 2: Homodimer. Can form oligomers. Dimerization is increased by oxidative stress and decreased by EGFR. Isoform 2 interacts with GRB2. A catalytically active cytoplasmic form (p65) is produced by proteolytic cleavage of either isoform 1, isoform 2 or isoform 3. In terms of processing, phosphorylated on tyrosine residues by tyrosine kinase Neu. Post-translationally, glycosylated. Isoform 2 is expressed in the spleen and thymus (at protein level). Detected in fibroblasts, myeloid cells, macrophages, and T-cells but not in B-cell lines. Isoform 1 and isoform 2 are expressed predominantly in the brain, testes, and lungs, with lower levels present in lymph nodes, thymus, spleen, heart and mammary glands. Isoform 1 is expressed in osteoclasts and not in osteoblasts and its expression is related to osteoclast differentiation. It is also expressed in the erythrocytes. Isoform 2 is strongly expressed in skeletal muscle and L6 skeletal muscle cell line.

It localises to the cell membrane. It is found in the cytoplasm. It carries out the reaction O-phospho-L-tyrosyl-[protein] + H2O = L-tyrosyl-[protein] + phosphate. Inhibited by alendronate (ALN), orthovanadate, and phenylarsine oxide (PAO). Functionally, acts as a negative regulator of insulin receptor (IR) signaling and is involved in insulin-induced glucose metabolism mainly through direct dephosphorylation and inactivation of IR in hepatocytes and liver. Plays a critical role in signaling transduction pathways and phosphoprotein network topology in red blood cells. May play a role in osteoclast formation and function. Acts as a negative regulator of insulin receptor (IR) signaling in skeletal muscle. Regulates insulin-induced tyrosine phosphorylation of insulin receptor (IR) and insulin receptor substrate 1 (IRS-1), phosphorylation of protein kinase B and glycogen synthase kinase-3 and insulin induced stimulation of glucose uptake. In terms of biological role, isoform 1 and isoform 2 act as a negative regulator of FceRI-mediated signal transduction leading to cytokine production and degranulation, most likely by acting at the level of SYK to affect downstream events such as phosphorylation of SLP76 and LAT and mobilization of Ca(2+). The protein is Receptor-type tyrosine-protein phosphatase epsilon (Ptpre) of Mus musculus (Mouse).